The primary structure comprises 352 residues: Dysbindin (352 aa).

The residue at position 11 (Ser-11) is a Phosphoserine. The stretch at Thr-92–Lys-180 forms a coiled coil. The Nuclear export signal motif lies at Leu-243–Leu-256. Residues Ser-267 to Ile-352 are disordered. Polar residues predominate over residues Ser-274 to Ile-285. A compositionally biased stretch (low complexity) spans Pro-286 to Ala-301. Phosphoserine is present on residues Ser-340 and Ser-343.

The protein belongs to the dysbindin family. In terms of assembly, interacts (via its coiled coil domain) with KXD1. Interacts with AP3B2, TRIM32, CMYA5, PI4K2 and RNF151. Interacts with the DNA-dependent protein kinase complex DNA-PK; the interaction phosphorylates DTNBP1 in vitro. Interacts directly in this complex with XRCC5 and XRCC6. Interacts with XPO1; the interaction exports DTNBP1 out of the nucleus. Component of the biogenesis of lysosome-related organelles complex 1 (BLOC-1) composed of at least BLOC1S1, BLOC1S2, BLOC1S3, BLOC1S4, BLOC1S5, BLOC1S6, DTNBP1/BLOC1S7 and SNAPIN/BLOC1S8. Interacts directly in the complex with BLOC1S5, BLOC1S6 and SNAPIN/BLOC1S8. The BLOC-1 complex associates with the AP-3 protein complex and membrane protein cargos. This BLOC-1 complex also associates with the BLOC-2 complex in endosomes. Binds to DTNA and DTNB but may not be a physiological binding partner. Interacts with AP3M1. In terms of processing, ubiquitinated by TRIM32. Ubiquitination leads to DTNBP1 degradation. As to expression, detected in hippocampus neurons (at protein level). Ubiquitously expressed. The highest expression is observed in testis, liver, kidney, brain, heart and lung. In the brain, found primarily in axon bundles and axon terminals, notably in the cerebellum and hippocampus. Expressed at lower levels in stomach, small intestine and skeletal muscle, where it is detected at the sarcolemma.

The protein resides in the cytoplasm. It is found in the cytoplasmic vesicle membrane. Its subcellular location is the cytoplasmic vesicle. The protein localises to the secretory vesicle. It localises to the synaptic vesicle membrane. The protein resides in the endosome membrane. It is found in the melanosome membrane. Its subcellular location is the nucleus. The protein localises to the postsynaptic density. It localises to the presynaptic cell membrane. The protein resides in the endoplasmic reticulum. Functionally, component of the BLOC-1 complex, a complex that is required for normal biogenesis of lysosome-related organelles (LRO), such as platelet dense granules and melanosomes. In concert with the AP-3 complex, the BLOC-1 complex is required to target membrane protein cargos into vesicles assembled at cell bodies for delivery into neurites and nerve terminals. The BLOC-1 complex, in association with SNARE proteins, is also proposed to be involved in neurite extension. Associates with the BLOC-2 complex to facilitate the transport of TYRP1 independent of AP-3 function. Plays a role in synaptic vesicle trafficking and in neurotransmitter release. Plays a role in the regulation of cell surface exposure of DRD2. May play a role in actin cytoskeleton reorganization and neurite outgrowth. May modulate MAPK8 phosphorylation. Appears to promote neuronal transmission and viability through regulating the expression of SNAP25 and SYN1, modulating PI3-kinase-Akt signaling and influencing glutamatergic release. Regulates the expression of SYN1 through binding to its promoter. Modulates prefrontal cortical activity via the dopamine/D2 pathway. The chain is Dysbindin (Dtnbp1) from Rattus norvegicus (Rat).